A 403-amino-acid polypeptide reads, in one-letter code: Acetate kinase (403 aa).

Mg(2+) is bound at residue asparagine 7. Position 14 (lysine 14) interacts with ATP. Arginine 90 serves as a coordination point for substrate. Aspartate 147 (proton donor/acceptor) is an active-site residue. ATP contacts are provided by residues 207–211 (HIGNG), 283–285 (DMR), and 331–335 (GVGEN). Glutamate 386 provides a ligand contact to Mg(2+).

This sequence belongs to the acetokinase family. As to quaternary structure, homodimer. The cofactor is Mg(2+). It depends on Mn(2+) as a cofactor.

The protein resides in the cytoplasm. The catalysed reaction is acetate + ATP = acetyl phosphate + ADP. It participates in metabolic intermediate biosynthesis; acetyl-CoA biosynthesis; acetyl-CoA from acetate: step 1/2. In terms of biological role, catalyzes the formation of acetyl phosphate from acetate and ATP. Can also catalyze the reverse reaction. Phosphorylates propionate (54%) in addition to acetate (100%). Uses GTP (100%), ITP (163%), UTP (56%), and CTP (21%) as phosphoryl donors in addition to ATP (100%). This chain is Acetate kinase, found in Thermotoga maritima (strain ATCC 43589 / DSM 3109 / JCM 10099 / NBRC 100826 / MSB8).